The primary structure comprises 630 residues: Mannosyl-oligosaccharide 1,2-alpha-mannosidase IC (630 aa).

Topologically, residues 1-22 (MLMRKVPGFVPASPWGLRLPQK) are cytoplasmic. The chain crosses the membrane as a helical; Signal-anchor for type II membrane protein span at residues 23–43 (FLFLLFLSGLVTLCFGALFLL). Residues 44–630 (PHSSRLKRLF…DSSGRAWGRH (587 aa)) are Lumenal-facing. The interval 74–140 (PAREQEPPPN…ASRPGDEGVP (67 aa)) is disordered. Positions 80–89 (PPPNPAPAAP) are enriched in pro residues. Residues 102-113 (PRRRKGGLRRTR) are compositionally biased toward basic residues. Position 164 is a phosphoserine (S164). N250 carries N-linked (GlcNAc...) asparagine glycosylation. C453 and C485 form a disulfide bridge. The active-site Proton donor is the E499. T610 contributes to the Ca(2+) binding site. N-linked (GlcNAc...) asparagine glycosylation occurs at N618.

Belongs to the glycosyl hydrolase 47 family. The cofactor is Ca(2+). Expressed in most tissues with the exception of lung, muscle and pancreas. Highly expressed in placenta.

The protein resides in the golgi apparatus membrane. It catalyses the reaction N(4)-(alpha-D-Man-(1-&gt;2)-alpha-D-Man-(1-&gt;2)-alpha-D-Man-(1-&gt;3)-[alpha-D-Man-(1-&gt;2)-alpha-D-Man-(1-&gt;3)-[alpha-D-Man-(1-&gt;2)-alpha-D-Man-(1-&gt;6)]-alpha-D-Man-(1-&gt;6)]-beta-D-Man-(1-&gt;4)-beta-D-GlcNAc-(1-&gt;4)-beta-D-GlcNAc)-L-asparaginyl-[protein] (N-glucan mannose isomer 9A1,2,3B1,2,3) + 4 H2O = N(4)-(alpha-D-Man-(1-&gt;3)-[alpha-D-Man-(1-&gt;3)-[alpha-D-Man-(1-&gt;6)]-alpha-D-Man-(1-&gt;6)]-beta-D-Man-(1-&gt;4)-beta-D-GlcNAc-(1-&gt;4)-beta-D-GlcNAc)-L-asparaginyl-[protein] (N-glucan mannose isomer 5A1,2) + 4 beta-D-mannose. The enzyme catalyses N(4)-(alpha-D-Man-(1-&gt;2)-alpha-D-Man-(1-&gt;2)-alpha-D-Man-(1-&gt;3)-[alpha-D-Man-(1-&gt;3)-[alpha-D-Man-(1-&gt;2)-alpha-D-Man-(1-&gt;6)]-alpha-D-Man-(1-&gt;6)]-beta-D-Man-(1-&gt;4)-beta-D-GlcNAc-(1-&gt;4)-beta-D-GlcNAc)-L-asparaginyl-[protein] (N-glucan mannose isomer 8A1,2,3B1,3) + 3 H2O = N(4)-(alpha-D-Man-(1-&gt;3)-[alpha-D-Man-(1-&gt;3)-[alpha-D-Man-(1-&gt;6)]-alpha-D-Man-(1-&gt;6)]-beta-D-Man-(1-&gt;4)-beta-D-GlcNAc-(1-&gt;4)-beta-D-GlcNAc)-L-asparaginyl-[protein] (N-glucan mannose isomer 5A1,2) + 3 beta-D-mannose. It functions in the pathway protein modification; protein glycosylation. Inhibited by both 1-deoxymannojirimycin and kifunensine. Functionally, involved in the maturation of Asn-linked oligosaccharides. Trim alpha-1,2-linked mannose residues from Man(9)GlcNAc(2) to produce first Man(8)GlcNAc(2) then Man(6)GlcNAc and a small amount of Man(5)GlcNAc. This is Mannosyl-oligosaccharide 1,2-alpha-mannosidase IC (MAN1C1) from Homo sapiens (Human).